Consider the following 100-residue polypeptide: Large ribosomal subunit protein uL23 (100 aa).

This sequence belongs to the universal ribosomal protein uL23 family. Part of the 50S ribosomal subunit. Contacts protein L29, and trigger factor when it is bound to the ribosome.

Its function is as follows. One of the early assembly proteins it binds 23S rRNA. One of the proteins that surrounds the polypeptide exit tunnel on the outside of the ribosome. Forms the main docking site for trigger factor binding to the ribosome. The sequence is that of Large ribosomal subunit protein uL23 from Mycolicibacterium smegmatis (strain ATCC 700084 / mc(2)155) (Mycobacterium smegmatis).